A 334-amino-acid chain; its full sequence is DNA-directed RNA polymerase subunit alpha (334 aa).

Residues methionine 1 to leucine 231 form an alpha N-terminal domain (alpha-NTD) region. Residues glutamate 247–asparagine 334 are alpha C-terminal domain (alpha-CTD).

The protein belongs to the RNA polymerase alpha chain family. Homodimer. The RNAP catalytic core consists of 2 alpha, 1 beta/beta' and 1 omega subunit. When a sigma factor is associated with the core the holoenzyme is formed, which can initiate transcription.

It catalyses the reaction RNA(n) + a ribonucleoside 5'-triphosphate = RNA(n+1) + diphosphate. DNA-dependent RNA polymerase catalyzes the transcription of DNA into RNA using the four ribonucleoside triphosphates as substrates. The protein is DNA-directed RNA polymerase subunit alpha of Helicobacter hepaticus (strain ATCC 51449 / 3B1).